The chain runs to 495 residues: Telomere-binding protein subunit alpha (495 aa).

The segment covering 1-13 has biased composition (polar residues); it reads MSTAAKQNRSTSR. The interval 1–31 is disordered; it reads MSTAAKQNRSTSRVSKKKTAAPKEGAAKKSD.

The protein belongs to the telombin family. Heterodimer of an alpha and a beta subunit.

It is found in the nucleus. The protein localises to the chromosome. Its subcellular location is the telomere. In terms of biological role, may function as protective capping of the single-stranded telomeric overhang. May also participate in telomere length regulation during DNA replication. Binds specifically to the T4G4-containing extension on the 3'strand and protects this region of the telomere from nuclease digestion and chemical modification. The protein is Telomere-binding protein subunit alpha (MAC-56A) of Sterkiella nova (Ciliate).